Reading from the N-terminus, the 248-residue chain is Small ribosomal subunit protein uS2 (248 aa).

This sequence belongs to the universal ribosomal protein uS2 family.

The chain is Small ribosomal subunit protein uS2 from Leptothrix cholodnii (strain ATCC 51168 / LMG 8142 / SP-6) (Leptothrix discophora (strain SP-6)).